We begin with the raw amino-acid sequence, 1291 residues long: Vigilin 1 (1291 aa).

Over residues 1-39 (MEHLSNLEQPTTMDSYDFQKLTNDENLQGTESQVPSGSK) the composition is skewed to polar residues. 2 disordered regions span residues 1-45 (MEHL…STNG) and 70-91 (HENA…KPAI). A compositionally biased stretch (low complexity) spans 73 to 88 (AQQGKKQNNSKSFSKK). Residue serine 115 is modified to Phosphoserine. The tract at residues 124–148 (TSVAGSDSVSRDKIPFSASSRASST) is disordered. KH domains are found at residues 166 to 229 (ILSP…RRQI), 236 to 328 (RETK…QKDI), 339 to 405 (TTVR…ALYL), 416 to 486 (TIPT…NSTI), 575 to 644 (SKFY…LADL), 658 to 726 (IVSE…VSEI), 741 to 798 (SHVE…AARI), 808 to 883 (DTIL…KQEL), 894 to 957 (AYTS…IKEI), 967 to 1040 (LVEK…ETRL), 1050 to 1114 (QVEE…KEMI), and 1219 to 1280 (NCIA…KDLI). The disordered stretch occupies residues 266–303 (TSTRIQIPKRNNTANESSDDAKKPEKEENSAASTLDDL). A compositionally biased stretch (polar residues) spans 268–281 (TRIQIPKRNNTANE). The segment covering 284–294 (DDAKKPEKEEN) has biased composition (basic and acidic residues). The disordered stretch occupies residues 845–865 (PREDDSSNSTGNELMKPTSPD). Position 934 is a phosphoserine (serine 934). Phosphothreonine is present on threonine 935.

It localises to the endoplasmic reticulum. The protein localises to the cytoplasm. Its function is as follows. Required for cell survival under thermal stress. This chain is Vigilin 1 (vgl1), found in Schizosaccharomyces pombe (strain 972 / ATCC 24843) (Fission yeast).